Here is a 428-residue protein sequence, read N- to C-terminus: AP2-like ethylene-responsive transcription factor At2g41710 (428 aa).

A compositionally biased stretch (polar residues) spans 1–10 (MASVSSSDQG). A disordered region spans residues 1–28 (MASVSSSDQGPKTEAGCSGGGGGESSET). Positions 70–136 (IYRGVTRHRW…WGPGTLINFP (67 aa)) form a DNA-binding region, AP2/ERF.

This sequence belongs to the AP2/ERF transcription factor family. AP2 subfamily.

It localises to the nucleus. Functionally, probably acts as a transcriptional activator. Binds to the GCC-box pathogenesis-related promoter element. May be involved in the regulation of gene expression by stress factors and by components of stress signal transduction pathways. The chain is AP2-like ethylene-responsive transcription factor At2g41710 from Arabidopsis thaliana (Mouse-ear cress).